We begin with the raw amino-acid sequence, 224 residues long: UPF0173 metal-dependent hydrolase EAT1b_0495 (224 aa).

It belongs to the UPF0173 family.

The protein is UPF0173 metal-dependent hydrolase EAT1b_0495 of Exiguobacterium sp. (strain ATCC BAA-1283 / AT1b).